The primary structure comprises 408 residues: Triose phosphate/phosphate translocator, chloroplastic (408 aa).

A chloroplast-targeting transit peptide spans 1-82; it reads MESRVLSSGA…VKRDVLKPCT (82 aa). At 83–102 the chain is on the chloroplast intermembrane side; it reads ATASDSAGDAAPVGFFAKYP. A helical transmembrane segment spans residues 103 to 123; it reads FLVTGFFFFMWYFLNVIFNIL. Residues 124-135 lie on the Lumenal side of the membrane; the sequence is NKKIYNYFPYPY. A helical transmembrane segment spans residues 136-156; that stretch reads FVSAIHLAVGVVYCLGGWAVG. The Chloroplast intermembrane segment spans residues 157–213; it reads LPKRAPMDSNLLKLLIPVAFCHALGHVTSNVSFAAVAVSFTHTIKSLEPFFNAAASQ. The chain crosses the membrane as a helical span at residues 214 to 234; sequence FILGQSIPITLWLSLAPVVIG. Over 235-278 the chain is Lumenal; that stretch reads VSMASLTELSFNWLGFISAMISNISFTYRSIYSKKAMTDMDSTN. The helical transmembrane segment at 279–298 threads the bilayer; that stretch reads LYAYISIISLLFCIPPAIIL. Residues 299–376 lie on the Chloroplast intermembrane side of the membrane; that stretch reads EGPQLLKHGF…IVFGNKISTQ (78 aa). Residues 377–397 form a helical membrane-spanning segment; sequence TAIGTSIAIAGVAVYSLIKAK. Topologically, residues 398–408 are lumenal; the sequence is IEEEKRGLKSA.

This sequence belongs to the TPT transporter family. TPT (TC 2.A.7.9) subfamily. Homodimer.

The protein resides in the plastid. Its subcellular location is the chloroplast membrane. Its function is as follows. Mediates the export of fixed carbons from the chloroplasts into the cytosol in the form of triose phosphates. The sequence is that of Triose phosphate/phosphate translocator, chloroplastic (TPT) from Flaveria pringlei.